Here is a 264-residue protein sequence, read N- to C-terminus: 14-3-3-like protein GF14-A (264 aa).

The segment at 245–264 (DMQDDGGDEMRDATKPEDEH) is disordered. Basic and acidic residues predominate over residues 252-264 (DEMRDATKPEDEH).

This sequence belongs to the 14-3-3 family.

Is associated with a DNA binding complex that binds to the G box, a well-characterized cis-acting DNA regulatory element found in plant genes. The sequence is that of 14-3-3-like protein GF14-A (GF14A) from Oryza sativa subsp. japonica (Rice).